A 1203-amino-acid polypeptide reads, in one-letter code: ATP-dependent helicase/nuclease subunit A (1203 aa).

The UvrD-like helicase ATP-binding domain occupies 4 to 472 (VKLTPEQNEA…IRLKENFRSR (469 aa)). 25–32 (ASAGSGKT) provides a ligand contact to ATP. The region spanning 503-785 (VQGNITDYPV…RVMTFHKSKG (283 aa)) is the UvrD-like helicase C-terminal domain.

The protein belongs to the helicase family. AddA subfamily. In terms of assembly, heterodimer of AddA and AddB/RexB. Mg(2+) serves as cofactor.

It carries out the reaction Couples ATP hydrolysis with the unwinding of duplex DNA by translocating in the 3'-5' direction.. The enzyme catalyses ATP + H2O = ADP + phosphate + H(+). The heterodimer acts as both an ATP-dependent DNA helicase and an ATP-dependent, dual-direction single-stranded exonuclease. Recognizes the chi site generating a DNA molecule suitable for the initiation of homologous recombination. The AddA nuclease domain is required for chi fragment generation; this subunit has the helicase and 3' -&gt; 5' nuclease activities. The protein is ATP-dependent helicase/nuclease subunit A of Lactococcus lactis subsp. lactis (strain IL1403) (Streptococcus lactis).